A 269-amino-acid chain; its full sequence is tRNA pseudouridine synthase A (269 aa).

The active-site Nucleophile is Asp51. Tyr109 contributes to the substrate binding site.

It belongs to the tRNA pseudouridine synthase TruA family. As to quaternary structure, homodimer.

It catalyses the reaction uridine(38/39/40) in tRNA = pseudouridine(38/39/40) in tRNA. In terms of biological role, formation of pseudouridine at positions 38, 39 and 40 in the anticodon stem and loop of transfer RNAs. This Haemophilus influenzae (strain PittGG) protein is tRNA pseudouridine synthase A.